We begin with the raw amino-acid sequence, 146 residues long: Ribonuclease H (146 aa).

In terms of domain architecture, RNase H type-1 spans 1 to 143; it reads MKEIIIYTDG…CDQLARNAIK (143 aa). Residues D9, E47, D70, and D135 each contribute to the Mg(2+) site.

It belongs to the RNase H family. Monomer. Requires Mg(2+) as cofactor.

It localises to the cytoplasm. The enzyme catalyses Endonucleolytic cleavage to 5'-phosphomonoester.. Its function is as follows. Endonuclease that specifically degrades the RNA of RNA-DNA hybrids. The polypeptide is Ribonuclease H (Syntrophomonas wolfei subsp. wolfei (strain DSM 2245B / Goettingen)).